The primary structure comprises 196 residues: UPF0340 protein TTHA0583 (196 aa).

This sequence belongs to the UPF0340 family.

The sequence is that of UPF0340 protein TTHA0583 from Thermus thermophilus (strain ATCC 27634 / DSM 579 / HB8).